Here is a 156-residue protein sequence, read N- to C-terminus: MAVVDLIDLPAIAPPNTPLVGLDLGEKTIGVAVSDATRMVASPLGLIRKTKFTDDAKALFKLMESRRASGIVIGLPVNMDGTEGTRCQSNRAFARNLLRLREDLPIAFWDERMSTMAVNRMLVGEADMTRARRADVVDKMAAAWILQGALDRLRNL.

The protein belongs to the YqgF nuclease family.

The protein resides in the cytoplasm. Its function is as follows. Could be a nuclease involved in processing of the 5'-end of pre-16S rRNA. The protein is Putative pre-16S rRNA nuclease of Phenylobacterium zucineum (strain HLK1).